Here is a 1577-residue protein sequence, read N- to C-terminus: MAP kinase-activating death domain protein (1577 aa).

In terms of domain architecture, uDENN spans 13–267 (YLVIVGARHP…VPVSGQKRVD (255 aa)). The segment covering 106–121 (KEKVEGGAGPRGKEGA) has biased composition (basic and acidic residues). Residues 106 to 166 (KEKVEGGAGP…WGKRRAKAGS (61 aa)) are disordered. Over residues 123 to 140 (TSGASEEAATGSSESGST) the composition is skewed to low complexity. Over residues 141-156 (LQPPSADSTPDINQSP) the composition is skewed to polar residues. Ser155 carries the post-translational modification Phosphoserine. Positions 288 to 428 (RFTLVDFPLH…ESLELKKHLK (141 aa)) constitute a cDENN domain. The 135-residue stretch at 430–564 (ALASMSLNTQ…LNPSNYAFQR (135 aa)) folds into the dDENN domain. 2 disordered regions span residues 604 to 635 (LSVPPERDSDSDPTEDSGSDSQDYDDSSSSYS) and 676 to 840 (QPQK…NSTE). The segment covering 614–629 (SDPTEDSGSDSQDYDD) has biased composition (acidic residues). 2 positions are modified to phosphoserine: Ser688 and Ser691. The span at 688–698 (SENSQENPPLR) shows a compositional bias: polar residues. Positions 699–715 (SSSSTTASSSPSTVVHS) are enriched in low complexity. Positions 793 to 803 (PRFSQHVSGSR) are enriched in polar residues. Residues Ser812, Ser817, and Ser819 each carry the phosphoserine modification. Over residues 826–839 (RASSPNSTVSNNST) the composition is skewed to low complexity. Residues Ser857, Ser861, Ser915, Ser920, Ser929, and Ser1058 each carry the phosphoserine modification. 3 disordered regions span residues 912-940 (QKSSVIKHSPTVKREPSSPQGRSSNSSEN), 1050-1109 (KEPD…DTRS), and 1127-1272 (EVKK…RSSE). Residues 928–938 (SSPQGRSSNSS) show a composition bias toward low complexity. Residues Thr1060 and Thr1065 each carry the phosphothreonine modification. A Phosphoserine modification is found at Ser1109. The span at 1127-1141 (EVKKQKALEKQRPEG) shows a compositional bias: basic and acidic residues. Positions 1157–1172 (QMSADSGVSLTSASQR) are enriched in polar residues. Residues 1189–1203 (SSSQDSEVSTVSNSS) are compositionally biased toward low complexity. Positions 1232 to 1248 (SRATLSDSEIETNSATS) are enriched in polar residues. Position 1235 is a phosphothreonine (Thr1235). Phosphoserine occurs at positions 1237 and 1266. Residues 1336–1411 (GMDQGPQEMI…GLVYSQQVNE (76 aa)) form the Death domain.

It belongs to the MADD family. As to quaternary structure, interacts (via death domain) with TNFRSF1A (via death domain). Interacts with PIDD1. Interacts with YWHAZ. Interacts (via death domain) with KIF1B; links the motor KIF1B to Rab3-carrying vesicles in anterograde synaptic vesicle transport. Interacts with KIF1A. Interacts (via uDENN domain) with RAB3A, RAB3B, RAB3C and RAB3D; the GTP-bound form of the Rab proteins is preferred for interaction. As to expression, expressed in the brain.

It localises to the cell membrane. The protein resides in the cytoplasm. Its subcellular location is the cell projection. It is found in the axon. In terms of biological role, guanyl-nucleotide exchange factor that regulates small GTPases of the Rab family. Converts GDP-bound inactive form of RAB27A and RAB27B to the GTP-bound active forms. Converts GDP-bound inactive form of RAB3A, RAB3C and RAB3D to the GTP-bound active forms, GTPases involved in synaptic vesicle exocytosis and vesicle secretion. Plays a role in synaptic vesicle formation and in vesicle trafficking at the neuromuscular junction. Involved in up-regulating a post-docking step of synaptic exocytosis in central synapses. Probably by binding to the motor proteins KIF1B and KIF1A, mediates motor-dependent transport of GTP-RAB3A-positive vesicles to the presynaptic nerve terminals. Plays a role in TNFA-mediated activation of the MAPK pathway, including ERK1/2. May link TNFRSF1A with MAP kinase activation. May be involved in the regulation of TNFA-induced apoptosis. This Mus musculus (Mouse) protein is MAP kinase-activating death domain protein.